The sequence spans 257 residues: Imidazole glycerol phosphate synthase subunit HisF (257 aa).

Residues Asp-12 and Asp-131 contribute to the active site.

It belongs to the HisA/HisF family. Heterodimer of HisH and HisF.

It localises to the cytoplasm. The catalysed reaction is 5-[(5-phospho-1-deoxy-D-ribulos-1-ylimino)methylamino]-1-(5-phospho-beta-D-ribosyl)imidazole-4-carboxamide + L-glutamine = D-erythro-1-(imidazol-4-yl)glycerol 3-phosphate + 5-amino-1-(5-phospho-beta-D-ribosyl)imidazole-4-carboxamide + L-glutamate + H(+). It functions in the pathway amino-acid biosynthesis; L-histidine biosynthesis; L-histidine from 5-phospho-alpha-D-ribose 1-diphosphate: step 5/9. Its function is as follows. IGPS catalyzes the conversion of PRFAR and glutamine to IGP, AICAR and glutamate. The HisF subunit catalyzes the cyclization activity that produces IGP and AICAR from PRFAR using the ammonia provided by the HisH subunit. This Paraburkholderia phymatum (strain DSM 17167 / CIP 108236 / LMG 21445 / STM815) (Burkholderia phymatum) protein is Imidazole glycerol phosphate synthase subunit HisF.